Reading from the N-terminus, the 198-residue chain is Probable chemoreceptor glutamine deamidase CheD (198 aa).

Belongs to the CheD family.

It carries out the reaction L-glutaminyl-[protein] + H2O = L-glutamyl-[protein] + NH4(+). In terms of biological role, probably deamidates glutamine residues to glutamate on methyl-accepting chemotaxis receptors (MCPs), playing an important role in chemotaxis. The protein is Probable chemoreceptor glutamine deamidase CheD of Stenotrophomonas maltophilia (strain K279a).